The primary structure comprises 434 residues: Glutamate-1-semialdehyde 2,1-aminomutase (434 aa).

Residue Lys274 is modified to N6-(pyridoxal phosphate)lysine.

This sequence belongs to the class-III pyridoxal-phosphate-dependent aminotransferase family. HemL subfamily. Homodimer. It depends on pyridoxal 5'-phosphate as a cofactor.

Its subcellular location is the cytoplasm. The enzyme catalyses (S)-4-amino-5-oxopentanoate = 5-aminolevulinate. The protein operates within porphyrin-containing compound metabolism; protoporphyrin-IX biosynthesis; 5-aminolevulinate from L-glutamyl-tRNA(Glu): step 2/2. In Acidovorax ebreus (strain TPSY) (Diaphorobacter sp. (strain TPSY)), this protein is Glutamate-1-semialdehyde 2,1-aminomutase.